Reading from the N-terminus, the 242-residue chain is Probable transcriptional regulatory protein NMB1648 (242 aa).

This sequence belongs to the TACO1 family.

Its subcellular location is the cytoplasm. The polypeptide is Probable transcriptional regulatory protein NMB1648 (Neisseria meningitidis serogroup B (strain ATCC BAA-335 / MC58)).